Here is a 264-residue protein sequence, read N- to C-terminus: 5'-nucleotidase SurE (264 aa).

The a divalent metal cation site is built by aspartate 10, aspartate 11, serine 43, and asparagine 99.

It belongs to the SurE nucleotidase family. The cofactor is a divalent metal cation.

The protein resides in the cytoplasm. The catalysed reaction is a ribonucleoside 5'-phosphate + H2O = a ribonucleoside + phosphate. Functionally, nucleotidase that shows phosphatase activity on nucleoside 5'-monophosphates. The protein is 5'-nucleotidase SurE of Methanococcus vannielii (strain ATCC 35089 / DSM 1224 / JCM 13029 / OCM 148 / SB).